The chain runs to 102 residues: Small ribosomal subunit protein uS10 (102 aa).

It belongs to the universal ribosomal protein uS10 family. In terms of assembly, part of the 30S ribosomal subunit.

Involved in the binding of tRNA to the ribosomes. This is Small ribosomal subunit protein uS10 from Desulfitobacterium hafniense (strain DSM 10664 / DCB-2).